The sequence spans 89 residues: HssA/B-like protein 10 (89 aa).

Belongs to the hssA/B family.

This Dictyostelium discoideum (Social amoeba) protein is HssA/B-like protein 10 (hssl10).